The sequence spans 116 residues: U11-theraphotoxin-Hhn1b (116 aa).

The N-terminal stretch at 1-21 (MNTVRVAFLLVFVLAVSLGQA) is a signal peptide. Residues 22–74 (DKDENRMEMQEKTEQGKSYLDFAENLLLQKLEELEAKLLEEDSEESRNSRQKR) constitute a propeptide that is removed on maturation. The tract at residues 61 to 83 (EEDSEESRNSRQKRCIGEGVPCD) is disordered. 3 disulfide bridges follow: Cys-75–Cys-90, Cys-82–Cys-95, and Cys-89–Cys-110.

This sequence belongs to the neurotoxin 14 (magi-1) family. 01 (HNTX-16) subfamily. In terms of tissue distribution, expressed by the venom gland.

The protein resides in the secreted. In terms of biological role, probable ion channel inhibitor. This Cyriopagopus hainanus (Chinese bird spider) protein is U11-theraphotoxin-Hhn1b.